The chain runs to 419 residues: Inositol-tetrakisphosphate 1-kinase (419 aa).

Lys18 is a binding site for 1D-myo-inositol 1,3,4-trisphosphate. Arg106 and Lys157 together coordinate ATP. One can recognise an ATP-grasp domain in the interval 117 to 334 (EAYMKDDRIC…TGGAATEEVA (218 aa)). 1D-myo-inositol 1,3,4-trisphosphate-binding residues include His167 and Lys199. ATP is bound by residues 188 to 199 (QNFINHNAVLYK), Ser214, Ser232, and Ser236. Mg(2+) contacts are provided by Asp281, Asp295, and Asn297. Asn297 is a binding site for 1D-myo-inositol 1,3,4-trisphosphate. Lys388 carries the N6-acetyllysine; by EP300 and CREBBP modification. Ser401 bears the Phosphoserine mark. Lys415 is subject to N6-acetyllysine; by EP300 and CREBBP.

The protein belongs to the ITPK1 family. In terms of assembly, monomer. Interacts with GPS1/COPS1. Requires Mg(2+) as cofactor. In terms of processing, acetylation by EP300 and CREBBP destabilizes ITPK1, and down-regulates enzymatic activity. Deacetylated by SIRT1.

It catalyses the reaction 1D-myo-inositol 3,4,5,6-tetrakisphosphate + ATP = 1D-myo-inositol 1,3,4,5,6-pentakisphosphate + ADP + H(+). The enzyme catalyses 1D-myo-inositol 1,3,4-trisphosphate + ATP = 1D-myo-inositol 1,3,4,5-tetrakisphosphate + ADP + H(+). The catalysed reaction is 1D-myo-inositol 1,3,4-trisphosphate + ATP = 1D-myo-inositol 1,3,4,6-tetrakisphosphate + ADP + H(+). It carries out the reaction 1D-myo-inositol 3,4,6-trisphosphate + ATP = 1D-myo-inositol 1,3,4,6-tetrakisphosphate + ADP + H(+). It catalyses the reaction 1D-myo-inositol 1,3,4-trisphosphate + 1D-myo-inositol 1,3,4,5,6-pentakisphosphate = 1D-myo-inositol 3,4,5,6-tetrakisphosphate + 1D-myo-inositol 1,3,4,6-tetrakisphosphate. The enzyme catalyses 1D-myo-inositol 1,3,4-trisphosphate + 1D-myo-inositol 1,3,4,5,6-pentakisphosphate = 1D-myo-inositol 3,4,5,6-tetrakisphosphate + 1D-myo-inositol 1,3,4,5-tetrakisphosphate. Functionally, kinase that can phosphorylate various inositol polyphosphate such as Ins(3,4,5,6)P4 or Ins(1,3,4)P3. Phosphorylates Ins(3,4,5,6)P4 at position 1 to form Ins(1,3,4,5,6)P5. This reaction is thought to have regulatory importance, since Ins(3,4,5,6)P4 is an inhibitor of plasma membrane Ca(2+)-activated Cl(-) channels, while Ins(1,3,4,5,6)P5 is not. Also phosphorylates Ins(1,3,4)P3 on O-5 and O-6 to form Ins(1,3,4,6)P4, an essential molecule in the hexakisphosphate (InsP6) pathway. Also acts as an inositol polyphosphate phosphatase that dephosphorylates Ins(1,3,4,5)P4 and Ins(1,3,4,6)P4 to Ins(1,3,4)P3, and Ins(1,3,4,5,6)P5 to Ins(3,4,5,6)P4. May also act as an isomerase that interconverts the inositol tetrakisphosphate isomers Ins(1,3,4,5)P4 and Ins(1,3,4,6)P4 in the presence of ADP and magnesium. Probably acts as the rate-limiting enzyme of the InsP6 pathway. Modifies TNF-alpha-induced apoptosis by interfering with the activation of TNFRSF1A-associated death domain. Plays an important role in MLKL-mediated necroptosis. Produces highly phosphorylated inositol phosphates such as inositolhexakisphosphate (InsP6) which bind to MLKL mediating the release of an N-terminal auto-inhibitory region leading to its activation. Essential for activated phospho-MLKL to oligomerize and localize to the cell membrane during necroptosis. The protein is Inositol-tetrakisphosphate 1-kinase of Mus musculus (Mouse).